Here is an 854-residue protein sequence, read N- to C-terminus: Probable inorganic carbon transporter subunit DabA (854 aa).

Zn(2+) contacts are provided by cysteine 378, aspartate 380, histidine 560, and cysteine 575.

It belongs to the inorganic carbon transporter (TC 9.A.2) DabA family. Forms a complex with DabB. The cofactor is Zn(2+).

It is found in the cell membrane. Part of an energy-coupled inorganic carbon pump. This Bacillus cereus (strain ATCC 14579 / DSM 31 / CCUG 7414 / JCM 2152 / NBRC 15305 / NCIMB 9373 / NCTC 2599 / NRRL B-3711) protein is Probable inorganic carbon transporter subunit DabA.